Reading from the N-terminus, the 190-residue chain is Nodulation protein L (190 aa).

This sequence belongs to the transferase hexapeptide repeat family.

Functionally, acetyltransferase implicated in the O-acetylation of Nod factors. This is Nodulation protein L (nodL) from Rhizobium leguminosarum bv. viciae.